Reading from the N-terminus, the 152-residue chain is MSEKVVATNKKAFHDYAILEKYEAGIVLTGSEVKSLREGACNLKDSFVMIEDGEAWLYNCYIAPYKPAAKFGHDPTRKRKLLLHKKEILKLMGKVKEKGLTIVPLRVYFKNGKAKVEIALAKGKVKYEKREAMKEKDMKREIEKSFKGKIKL.

Belongs to the SmpB family.

Its subcellular location is the cytoplasm. In terms of biological role, required for rescue of stalled ribosomes mediated by trans-translation. Binds to transfer-messenger RNA (tmRNA), required for stable association of tmRNA with ribosomes. tmRNA and SmpB together mimic tRNA shape, replacing the anticodon stem-loop with SmpB. tmRNA is encoded by the ssrA gene; the 2 termini fold to resemble tRNA(Ala) and it encodes a 'tag peptide', a short internal open reading frame. During trans-translation Ala-aminoacylated tmRNA acts like a tRNA, entering the A-site of stalled ribosomes, displacing the stalled mRNA. The ribosome then switches to translate the ORF on the tmRNA; the nascent peptide is terminated with the 'tag peptide' encoded by the tmRNA and targeted for degradation. The ribosome is freed to recommence translation, which seems to be the essential function of trans-translation. The chain is SsrA-binding protein from Sulfurihydrogenibium sp. (strain YO3AOP1).